A 131-amino-acid chain; its full sequence is MPLKLSLKPGEKFVLNGAVVQNGDRRGVLVLQNKASVLREKDIMQLDEATTPARRIYFPVMMMYLDEANAERQYEEFATRLTEFMGVVRNPDVLTDCIAISKHVMAREHYKALMLSRKLIEYEDQRLGHVS.

It belongs to the FlbT family.

In terms of biological role, has a post-transcriptional repressor function in flagellum biogenesis. Associates with the 5'-UTR of fljK mRNA and promotes its degradation. This Caulobacter sp. (strain K31) protein is Probable flagellum biosynthesis repressor protein FlbT.